A 406-amino-acid polypeptide reads, in one-letter code: Betaine--homocysteine S-methyltransferase 1 (406 aa).

One can recognise a Hcy-binding domain in the interval 11–314 (KGILERLNAG…YHIRAIAEEL (304 aa)). An N6-succinyllysine mark is found at Lys40, Lys93, and Lys98. Position 217 (Cys217) interacts with Zn(2+). An N6-succinyllysine mark is found at Lys232 and Lys241. Positions 299 and 300 each coordinate Zn(2+). Ser330 carries the phosphoserine modification. Lys340 and Lys377 each carry N6-succinyllysine.

In terms of assembly, homotetramer. Zn(2+) serves as cofactor.

It is found in the cytoplasm. The protein localises to the cytosol. It localises to the nucleus. It catalyses the reaction L-homocysteine + glycine betaine = N,N-dimethylglycine + L-methionine. The protein operates within amine and polyamine degradation; betaine degradation; sarcosine from betaine: step 1/2. Its pathway is amino-acid biosynthesis; L-methionine biosynthesis via de novo pathway; L-methionine from L-homocysteine (BhmT route): step 1/1. Involved in the regulation of homocysteine metabolism. Converts betaine and homocysteine to dimethylglycine and methionine, respectively. This reaction is also required for the irreversible oxidation of choline. The protein is Betaine--homocysteine S-methyltransferase 1 (BHMT) of Pongo abelii (Sumatran orangutan).